The chain runs to 366 residues: Peptide chain release factor 2 (366 aa).

Gln-251 carries the N5-methylglutamine modification.

It belongs to the prokaryotic/mitochondrial release factor family. Methylated by PrmC. Methylation increases the termination efficiency of RF2.

The protein resides in the cytoplasm. Peptide chain release factor 2 directs the termination of translation in response to the peptide chain termination codons UGA and UAA. The sequence is that of Peptide chain release factor 2 (prfB) from Listeria monocytogenes serovar 1/2a (strain ATCC BAA-679 / EGD-e).